A 167-amino-acid chain; its full sequence is MTRKTRRLWIVIACLACVGSAAALTLRAFSSNIVFFMAPSQVKANPPSPDRTIRLGGMVMAGSLHRINENGTPVNAFEVTDGQAAVEVHYTGILPDLFREGQSVVALGTVQKDGGFTASEVLAKHDETYMPKEVADELKRTGKWDPRFGKAPDASSWDTMTAKKAGG.

The Cytoplasmic portion of the chain corresponds to 1 to 7 (MTRKTRR). A helical; Signal-anchor for type II membrane protein transmembrane segment spans residues 8 to 28 (LWIVIACLACVGSAAALTLRA). The Periplasmic portion of the chain corresponds to 29-167 (FSSNIVFFMA…DTMTAKKAGG (139 aa)). Residues His-125 and Tyr-129 each contribute to the heme site. The segment covering 141–150 (TGKWDPRFGK) has biased composition (basic and acidic residues). The interval 141–167 (TGKWDPRFGKAPDASSWDTMTAKKAGG) is disordered.

Belongs to the CcmE/CycJ family.

It localises to the cell inner membrane. Its function is as follows. Heme chaperone required for the biogenesis of c-type cytochromes. Transiently binds heme delivered by CcmC and transfers the heme to apo-cytochromes in a process facilitated by CcmF and CcmH. In Gluconobacter oxydans (strain 621H) (Gluconobacter suboxydans), this protein is Cytochrome c-type biogenesis protein CcmE.